Here is an 801-residue protein sequence, read N- to C-terminus: Mitochondrial intermediate peptidase (801 aa).

The N-terminal 41 residues, 1–41, are a transit peptide targeting the mitochondrion; sequence MKPQLLTPLRRRPWTCRQCLQRLQRLQQQTRRSFETAASPA. A disordered region spans residues 31–54; the sequence is RRSFETAASPAPGHTQVDYIPADA. His565 is a Zn(2+) binding site. The active site involves Glu566. His569 and His572 together coordinate Zn(2+).

This sequence belongs to the peptidase M3 family. It depends on Zn(2+) as a cofactor.

It localises to the mitochondrion matrix. It catalyses the reaction Release of an N-terminal octapeptide as second stage of processing of some proteins imported into the mitochondrion.. Its function is as follows. Cleaves proteins, imported into the mitochondrion, to their mature size. While most mitochondrial precursor proteins are processed to the mature form in one step by mitochondrial processing peptidase (MPP), the sequential cleavage by MIP of an octapeptide after initial processing by MPP is a required step for a subgroup of nuclear-encoded precursor proteins destined for the matrix or the inner membrane. This is Mitochondrial intermediate peptidase (oct1) from Aspergillus clavatus (strain ATCC 1007 / CBS 513.65 / DSM 816 / NCTC 3887 / NRRL 1 / QM 1276 / 107).